The chain runs to 184 residues: Ribosome-recycling factor (184 aa).

Belongs to the RRF family.

The protein localises to the cytoplasm. Functionally, responsible for the release of ribosomes from messenger RNA at the termination of protein biosynthesis. May increase the efficiency of translation by recycling ribosomes from one round of translation to another. The polypeptide is Ribosome-recycling factor (Staphylococcus carnosus (strain TM300)).